The primary structure comprises 155 residues: Protein-export protein SecB (155 aa).

It belongs to the SecB family. As to quaternary structure, homotetramer, a dimer of dimers. One homotetramer interacts with 1 SecA dimer.

It localises to the cytoplasm. One of the proteins required for the normal export of preproteins out of the cell cytoplasm. It is a molecular chaperone that binds to a subset of precursor proteins, maintaining them in a translocation-competent state. It also specifically binds to its receptor SecA. This Paramagnetospirillum magneticum (strain ATCC 700264 / AMB-1) (Magnetospirillum magneticum) protein is Protein-export protein SecB.